The following is a 357-amino-acid chain: MKASIYDFTLKELSQLLKPSFRAKQLYLWLYAKYKTSFKDMQNNFSKDFIAYLEREFALRTIEITHVRESVDGSKKYLFKSLRDNHTFEAVLLKMKDKKIDAETNAILEREKYTVCVSCQIGCQVGCSFCFTQKGGFVRNLKASEIIQQALLIKEDNNLPLEKALNIVFMGMGEPLNNLDEVCKAIEIFNTGMQISPKRITISTSGVADKIPILAGKNLGVQLAISLHAVDDKTRSSLMPLNKKYNIECVLNEVRKWPLEQRKRVMFEYLLIKDLNDSLDCAKKLLKLLNGIKSKVNLILFNPHEGSKFERPSLENARMFADFLNSKGLLCTIRESKALDIEAACGQLREKKLSQQI.

Glutamate 89 (proton acceptor) is an active-site residue. In terms of domain architecture, Radical SAM core spans 109–340; the sequence is EREKYTVCVS…CTIRESKALD (232 aa). Cysteines 116 and 345 form a disulfide. Cysteine 123, cysteine 127, and cysteine 130 together coordinate [4Fe-4S] cluster. S-adenosyl-L-methionine is bound by residues 173–174, serine 203, 226–228, and asparagine 302; these read GE and SLH. Cysteine 345 acts as the S-methylcysteine intermediate in catalysis.

Belongs to the radical SAM superfamily. RlmN family. The cofactor is [4Fe-4S] cluster.

The protein resides in the cytoplasm. The catalysed reaction is adenosine(2503) in 23S rRNA + 2 reduced [2Fe-2S]-[ferredoxin] + 2 S-adenosyl-L-methionine = 2-methyladenosine(2503) in 23S rRNA + 5'-deoxyadenosine + L-methionine + 2 oxidized [2Fe-2S]-[ferredoxin] + S-adenosyl-L-homocysteine. It carries out the reaction adenosine(37) in tRNA + 2 reduced [2Fe-2S]-[ferredoxin] + 2 S-adenosyl-L-methionine = 2-methyladenosine(37) in tRNA + 5'-deoxyadenosine + L-methionine + 2 oxidized [2Fe-2S]-[ferredoxin] + S-adenosyl-L-homocysteine. In terms of biological role, specifically methylates position 2 of adenine 2503 in 23S rRNA and position 2 of adenine 37 in tRNAs. m2A2503 modification seems to play a crucial role in the proofreading step occurring at the peptidyl transferase center and thus would serve to optimize ribosomal fidelity. The protein is Dual-specificity RNA methyltransferase RlmN of Helicobacter pylori (strain ATCC 700392 / 26695) (Campylobacter pylori).